We begin with the raw amino-acid sequence, 275 residues long: DNA polymerase II subunit B4 (275 aa).

The DNA-binding element occupies L11 to R17. The span at A112 to K122 shows a compositional bias: low complexity. The interval A112–E275 is disordered. Positions K135 to P142 match the Nuclear localization signal motif. The segment covering S151–D161 has biased composition (basic and acidic residues). Positions K152–D179 form a coiled coil. 2 stretches are compositionally biased toward acidic residues: residues E162 to G237 and E266 to E275.

It belongs to the NFYB/HAP3 subunit family. In terms of assembly, heterotrimeric transcription factor composed of three components, NF-YA, NF-YB and NF-YC. NF-YB and NF-YC must interact and dimerize for NF-YA association and DNA binding. Binds directly with DPB3-1.

The protein localises to the nucleus. Component of the NF-Y/HAP transcription factor complex. The NF-Y complex stimulates the transcription of various genes by recognizing and binding to a CCAAT motif in promoters. In Arabidopsis thaliana (Mouse-ear cress), this protein is DNA polymerase II subunit B4.